Reading from the N-terminus, the 37-residue chain is Kappa-actitoxin-Bgr1a (37 aa).

The 36-residue stretch at 2-37 folds into the ShKT domain; that stretch reads CRDWFKETACRHAKSLGNCRTSQKYRANCAKTCELC. 3 cysteine pairs are disulfide-bonded: Cys-2–Cys-37, Cys-11–Cys-30, and Cys-20–Cys-34. The crucial for binding to potassium channels stretch occupies residues 25–26; the sequence is KY.

This sequence belongs to the sea anemone type 1 potassium channel toxin family. Type 1b subfamily.

The protein localises to the secreted. It is found in the nematocyst. In terms of biological role, inhibits voltage-dependent potassium channels of the Kv1 family (Kv1.1/KCNA1 (Kd=6 nM), Kv1.2/KCNA2 (Kd=15 nM), Kv1.3/KCNA3 (Kd=10-39 nM), Kv1.6/KCNA6, and KCa3.1/KCNN4 (Kd=172 nM)). In Bunodosoma granuliferum (Red warty sea anemone), this protein is Kappa-actitoxin-Bgr1a.